Reading from the N-terminus, the 609-residue chain is Probable G-protein coupled receptor 153 (609 aa).

Topologically, residues 1–11 are extracellular; that stretch reads MSDERRLPGSA. A helical membrane pass occupies residues 12-32; that stretch reads VGWLVCGGLSLLANAWGILSV. Topologically, residues 33–41 are cytoplasmic; it reads GAKQKKWKP. Residues 42–62 traverse the membrane as a helical segment; it reads LEFLLCTLAATHMLNVAVPIA. At 63-84 the chain is on the extracellular side; the sequence is TYSVVQLRRQRPDFEWNEGLCK. A helical membrane pass occupies residues 85-105; the sequence is VFVSTFYTLTLATCFSVTSLS. Residues 106-126 are Cytoplasmic-facing; that stretch reads YHRMWMVCWPVNYRLSNAKKQ. Residues 127–147 traverse the membrane as a helical segment; the sequence is AVHTVMGIWMVSFILSALPAV. The Extracellular segment spans residues 148 to 175; that stretch reads GWHDTSERFYTHGCRFIVAEIGLGFGVC. A helical transmembrane segment spans residues 176–196; sequence FLLLVGGSVAMGVICTAIALF. Residues 197 to 243 lie on the Cytoplasmic side of the membrane; that stretch reads QTLAVQVGRQADRRAFTVPTIVVEDAQGKRRSSIDGSEPAKTSLQTT. The helical transmembrane segment at 244-264 threads the bilayer; it reads GLVTTIVFIYDCLMGFPVLVV. The Extracellular portion of the chain corresponds to 265-276; the sequence is SFSSLRADASAP. A helical transmembrane segment spans residues 277-297; the sequence is WMALCVLWCSVAQALLLPVFL. Residues 298 to 609 lie on the Cytoplasmic side of the membrane; that stretch reads WACDRYRADL…LHSDSLGSAS (312 aa). 2 disordered regions span residues 446–496 and 514–609; these read DAPP…SASA and ALRR…GSAS. Low complexity-rich tracts occupy residues 458–479 and 527–536; these read ESLLSLRPSALDSGPRGARDSP and AAPDGADPGE. Residues 571-583 show a composition bias toward gly residues; it reads EPGGLRAAGGGGS. Low complexity predominate over residues 584 to 596; that stretch reads TSSFLSSPSESSG.

The protein belongs to the G-protein coupled receptor 1 family.

The protein resides in the cell membrane. In terms of biological role, orphan receptor. The polypeptide is Probable G-protein coupled receptor 153 (GPR153) (Homo sapiens (Human)).